The primary structure comprises 591 residues: Lysyl oxidase homolog 1 (591 aa).

The signal sequence occupies residues 1 to 22 (MALALTGWQLVWGACVCVLVHG). Residues 23-91 (QQAPPGQGSD…PRRRGGLRRR (69 aa)) constitute a propeptide that is removed on maturation. 2 disordered regions span residues 77–107 (APQA…SDTV) and 233–373 (EYGG…RLSV). The span at 82 to 92 (PRRRGGLRRRQ) shows a compositional bias: basic residues. A compositionally biased stretch (gly residues) spans 298–313 (NGGGGGGTYGGGGGDP). Positions 319-386 (PPYGNMPPEA…YRPNQNGRGL (68 aa)) are interaction with FBLN5. The interval 387-591 (PDLVPDPNYV…STTNCKIVQS (205 aa)) is lysyl-oxidase like. Intrachain disulfides connect cysteine 412-cysteine 418, cysteine 465-cysteine 514, cysteine 498-cysteine 504, cysteine 525-cysteine 535, and cysteine 572-cysteine 586. Positions 466, 468, and 470 each coordinate Cu cation. Residues 494–529 (KASFCLEDSTCDFGNLKRYACTSHTQGLSPGCYDTY) constitute a cross-link (lysine tyrosylquinone (Lys-Tyr)). Tyrosine 529 carries the 2',4',5'-topaquinone modification.

This sequence belongs to the lysyl oxidase family. Interacts (via propeptide) with EFEMP2. Interacts with FBLN5. Cu cation is required as a cofactor. The cofactor is lysine tyrosylquinone residue. Post-translationally, the lysine tyrosylquinone cross-link (LTQ) is generated by condensation of the epsilon-amino group of a lysine with a topaquinone produced by oxidation of tyrosine. In terms of processing, proteolytic processing by a furin-like protease causes removal of N-terminal propeptide resulting in an enzyme largely inactive, but further proteolytic processing by BMP1 results in enzyme activation.

Its subcellular location is the secreted. The protein localises to the extracellular space. It is found in the extracellular matrix. The catalysed reaction is L-lysyl-[protein] + O2 + H2O = (S)-2-amino-6-oxohexanoyl-[protein] + H2O2 + NH4(+). Its function is as follows. Catalyzes the oxidative deamination of lysine and hydroxylysine residues in collagen and elastin, resulting in the formation of covalent cross-linkages, and the stabilization of collagen and elastin fibers. Essential for the elastic fiber homeostasis and for their maintenance at adult age. The polypeptide is Lysyl oxidase homolog 1 (LOXL1) (Bos taurus (Bovine)).